A 112-amino-acid polypeptide reads, in one-letter code: MINLHRLCIIHVVATLLSTLLSLISVAISATCKDEKGKQEMETGQQPSGLSATLTKVKCAKRQKTVVRVRFYMLSMKNKACRKNLSKGYNQRPEGSKEESHMVVKEKRKGDH.

Residues 1-29 (MINLHRLCIIHVVATLLSTLLSLISVAIS) form the signal peptide. N-linked (GlcNAc...) asparagine glycosylation occurs at asparagine 84. Residues 84–112 (NLSKGYNQRPEGSKEESHMVVKEKRKGDH) are disordered. Over residues 94–112 (EGSKEESHMVVKEKRKGDH) the composition is skewed to basic and acidic residues.

It is found in the secreted. This is an uncharacterized protein from Homo sapiens (Human).